A 699-amino-acid chain; its full sequence is Elongation factor G (699 aa).

A tr-type G domain is found at 8–283 (EHIRNIGICA…AVVDFLPSPI (276 aa)). GTP contacts are provided by residues 17-24 (AHIDAGKT), 81-85 (DTPGH), and 135-138 (NKMD).

It belongs to the TRAFAC class translation factor GTPase superfamily. Classic translation factor GTPase family. EF-G/EF-2 subfamily.

Its subcellular location is the cytoplasm. Catalyzes the GTP-dependent ribosomal translocation step during translation elongation. During this step, the ribosome changes from the pre-translocational (PRE) to the post-translocational (POST) state as the newly formed A-site-bound peptidyl-tRNA and P-site-bound deacylated tRNA move to the P and E sites, respectively. Catalyzes the coordinated movement of the two tRNA molecules, the mRNA and conformational changes in the ribosome. The chain is Elongation factor G from Rickettsia conorii (strain ATCC VR-613 / Malish 7).